The following is a 735-amino-acid chain: Protein RETICULATA-RELATED 5, chloroplastic (735 aa).

The N-terminal 75 residues, Met-1–Pro-75, are a transit peptide targeting the chloroplast. 2 helical membrane-spanning segments follow: residues Ala-519–Tyr-539 and Val-582–Gly-602. The span at Ala-714–Glu-726 shows a compositional bias: polar residues. The tract at residues Ala-714–Gln-735 is disordered.

It belongs to the RETICULATA family.

It is found in the plastid. Its subcellular location is the chloroplast membrane. In terms of biological role, may play a role in leaf development. The sequence is that of Protein RETICULATA-RELATED 5, chloroplastic from Arabidopsis thaliana (Mouse-ear cress).